The primary structure comprises 700 residues: pH-response regulator protein palI/prr-5 (700 aa).

Residues 1 to 8 lie on the Cytoplasmic side of the membrane; sequence MLRPATPL. The helical transmembrane segment at 9–29 threads the bilayer; it reads AVLLFAAFGLLTLATISTPII. The Extracellular portion of the chain corresponds to 30–90; the sequence is KQIPLSSFEI…PRATRSTLSS (61 aa). A helical membrane pass occupies residues 91 to 111; sequence ILIVHPVAALITLINFVLAIV. Over 112-123 the chain is Cytoplasmic; the sequence is AHFHSPSHSARY. The chain crosses the membrane as a helical span at residues 124 to 144; the sequence is LLILFIVSFVDFIVCLLCFLV. The Extracellular segment spans residues 145-152; sequence DVLLFIPH. A helical transmembrane segment spans residues 153–173; sequence LSWGSYIVVAATILVAFCGLV. Over 174–700 the chain is Cytoplasmic; the sequence is TCAMRRTLVN…GNMPRAAGPR (527 aa). 3 disordered regions span residues 226–491, 507–560, and 573–700; these read SGAN…GIRD, VPDP…PISE, and DVDP…AGPR. The span at 234 to 252 shows a compositional bias: basic and acidic residues; sequence KLPEFTTFEKKDDRSEERI. Residues 320-378 show a composition bias toward gly residues; the sequence is GRGGMPPGGYRGRGGFPGPGRGGGPPQNGRGGYGPPGRGRGGYGPPPRGYGGPGPRGGR. Polar residues predominate over residues 414-424; that stretch reads SPYANRQQSPG. Composition is skewed to polar residues over residues 593 to 603 and 615 to 637; these read SMQSPPASNSY and ESEN…NSAN. Low complexity predominate over residues 657–671; sequence VVPRRPVNRPGAGPA.

It belongs to the palI/RIM9 family.

It is found in the cell membrane. Its function is as follows. Required for the proteolytic cleavage of the transcription factor pacc-1 in response to alkaline ambient pH. This is pH-response regulator protein palI/prr-5 (prr-5) from Neurospora crassa (strain ATCC 24698 / 74-OR23-1A / CBS 708.71 / DSM 1257 / FGSC 987).